A 131-amino-acid polypeptide reads, in one-letter code: Profilin-11 (131 aa).

C13 and C115 are oxidised to a cystine. The Involved in PIP2 interaction motif lies at 81-97; that stretch reads AVIRGKKGSGGITVKKT. T111 is subject to Phosphothreonine.

Belongs to the profilin family. As to quaternary structure, occurs in many kinds of cells as a complex with monomeric actin in a 1:1 ratio. Phosphorylated by MAP kinases.

It localises to the cytoplasm. It is found in the cytoskeleton. In terms of biological role, binds to actin and affects the structure of the cytoskeleton. At high concentrations, profilin prevents the polymerization of actin, whereas it enhances it at low concentrations. This is Profilin-11 from Zea mays (Maize).